The primary structure comprises 121 residues: uncharacterized protein (121 aa).

Positions 9–77 (KPIYLQIADQ…RGQGTFIAEK (69 aa)) constitute an HTH gntR-type domain. The segment at residues 37-56 (VREMAIQTKVNPNTIQRTYS) is a DNA-binding region (H-T-H motif).

This is an uncharacterized protein from Bacillus subtilis (strain 168).